A 627-amino-acid polypeptide reads, in one-letter code: Serine/threonine-protein kinase Nek5 (627 aa).

Residues F4–L255 enclose the Protein kinase domain. ATP contacts are provided by residues I10–V18 and K33. Catalysis depends on D124, which acts as the Proton acceptor. The segment covering Q563 to D580 has biased composition (acidic residues). Disordered stretches follow at residues Q563–L582 and E591–Q627. Residues N609–T619 are compositionally biased toward basic and acidic residues.

This sequence belongs to the protein kinase superfamily. NEK Ser/Thr protein kinase family. NIMA subfamily. Requires Mg(2+) as cofactor.

It is found in the cell projection. Its subcellular location is the cilium. It localises to the flagellum. The catalysed reaction is L-seryl-[protein] + ATP = O-phospho-L-seryl-[protein] + ADP + H(+). It catalyses the reaction L-threonyl-[protein] + ATP = O-phospho-L-threonyl-[protein] + ADP + H(+). In Mus musculus (Mouse), this protein is Serine/threonine-protein kinase Nek5 (Nek5).